Here is a 118-residue protein sequence, read N- to C-terminus: Small ribosomal subunit protein uS13 (118 aa).

The segment at 91-118 (HRRGLPVRGQRTRTNARTRKGPRRPIKK) is disordered.

This sequence belongs to the universal ribosomal protein uS13 family. In terms of assembly, part of the 30S ribosomal subunit. Forms a loose heterodimer with protein S19. Forms two bridges to the 50S subunit in the 70S ribosome.

Located at the top of the head of the 30S subunit, it contacts several helices of the 16S rRNA. In the 70S ribosome it contacts the 23S rRNA (bridge B1a) and protein L5 of the 50S subunit (bridge B1b), connecting the 2 subunits; these bridges are implicated in subunit movement. Contacts the tRNAs in the A and P-sites. The protein is Small ribosomal subunit protein uS13 of Methylococcus capsulatus (strain ATCC 33009 / NCIMB 11132 / Bath).